The following is a 502-amino-acid chain: Protein MGF 505-5R (502 aa).

Belongs to the asfivirus MGF 505 family.

In terms of biological role, plays a role in virus cell tropism, and may be required for efficient virus replication in macrophages. The protein is Protein MGF 505-5R of African swine fever virus (isolate Tick/Malawi/Lil 20-1/1983) (ASFV).